Reading from the N-terminus, the 393-residue chain is Digeranylgeranylglycerophospholipid reductase (393 aa).

The FAD site is built by Ala-13, Asp-32, Cys-43, Ala-44, Gly-46, Arg-95, Val-119, Asp-274, and Gly-286. Residues Lys-327 and Gly-363 each contribute to the a 2,3-bis-O-(geranylgeranyl)-sn-glycerol 1-phospholipid site.

It belongs to the geranylgeranyl reductase family. DGGGPL reductase subfamily. It depends on FAD as a cofactor.

The enzyme catalyses a 2,3-bis-O-phytanyl-sn-glycerol 1-phospholipid + 8 A = a 2,3-bis-O-(geranylgeranyl)-sn-glycerol 1-phospholipid + 8 AH2. The catalysed reaction is 2,3-bis-O-(phytanyl)-sn-glycerol 1-phosphate + 8 A = 2,3-bis-O-(geranylgeranyl)-sn-glycerol 1-phosphate + 8 AH2. It catalyses the reaction CDP-2,3-bis-O-(geranylgeranyl)-sn-glycerol + 8 AH2 = CDP-2,3-bis-O-(phytanyl)-sn-glycerol + 8 A. It carries out the reaction archaetidylserine + 8 AH2 = 2,3-bis-O-phytanyl-sn-glycero-3-phospho-L-serine + 8 A. It functions in the pathway membrane lipid metabolism; glycerophospholipid metabolism. Functionally, is involved in the reduction of 2,3-digeranylgeranylglycerophospholipids (unsaturated archaeols) into 2,3-diphytanylglycerophospholipids (saturated archaeols) in the biosynthesis of archaeal membrane lipids. Catalyzes the formation of archaetidic acid (2,3-di-O-phytanyl-sn-glyceryl phosphate) from 2,3-di-O-geranylgeranylglyceryl phosphate (DGGGP) via the hydrogenation of each double bond of the isoprenoid chains. Is also probably able to reduce double bonds of geranyl groups in CDP-2,3-bis-O-(geranylgeranyl)-sn-glycerol and archaetidylserine, thus acting at various stages in the biosynthesis of archaeal membrane lipids. The polypeptide is Digeranylgeranylglycerophospholipid reductase (Pyrococcus furiosus (strain ATCC 43587 / DSM 3638 / JCM 8422 / Vc1)).